The chain runs to 457 residues: MVQINEVKDTQTRESRTAAHTHIKGLGLDEHGIAKRVEGGFVGQSDAREACGIIVDLIKSKRMSGKAILLAGAPGTGKTALALAISQELGPKVPFCPIVGSELFSAEIKKTAALMENFRRAIGLRIKETKEVYEGEVIELTPEEAENPLGGYGKTISHVIVGLKTAKGTKSLRLDPSIYESIQKERVSVGDVIYIEANTGSVKRVGRSDAYATEFDLEAEEYVPLPKGEVHKKKEIVQDVTLHDLDVANARPQGGQDVLSMMGQLLKPRKTEITDKLRSEVNKVVSKYIDQGVAELIPGVLFIDEVNMLDIECFTYLNRALESSIAPIVVLASNRGMTTIRGTDDDKKSPHGCPADLIDRLLIVRTLPYNQEEIKIIISKRATLENLIVTPDALDKLSLHGINNSLRYALQLLAPAGVLSKTAGRNEITSEDIEECEILFLDSRRSIKILEETKGYL.

72–79 (GAPGTGKT) is a binding site for ATP.

The protein belongs to the RuvB family. May form heterododecamers with RVB2. Component of the SWR1 chromatin remodeling complex, the INO80 chromatin remodeling complex, and of the R2TP complex.

The protein localises to the nucleus. It catalyses the reaction ATP + H2O = ADP + phosphate + H(+). In terms of biological role, DNA helicase which participates in several chromatin remodeling complexes, including the SWR1 and the INO80 complexes. The SWR1 complex mediates the ATP-dependent exchange of histone H2A for the H2A variant HZT1 leading to transcriptional regulation of selected genes by chromatin remodeling. The INO80 complex remodels chromatin by shifting nucleosomes and is involved in DNA repair. Also involved in pre-rRNA processing. This chain is RuvB-like helicase 1 (RBV1), found in Debaryomyces hansenii (strain ATCC 36239 / CBS 767 / BCRC 21394 / JCM 1990 / NBRC 0083 / IGC 2968) (Yeast).